A 721-amino-acid polypeptide reads, in one-letter code: Catalase-peroxidase 1 (721 aa).

The tryptophyl-tyrosyl-methioninium (Trp-Tyr) (with M-249) cross-link spans 98 to 223 (WHAAGSYRVA…LAAVQMGLIY (126 aa)). Catalysis depends on H99, which acts as the Proton acceptor. The segment at residues 223–249 (YVNPEGVNGQPDPLRTAQDVRVTFGRM) is a cross-link (tryptophyl-tyrosyl-methioninium (Tyr-Met) (with W-98)). Residue H264 participates in heme b binding.

It belongs to the peroxidase family. Peroxidase/catalase subfamily. Homodimer or homotetramer. It depends on heme b as a cofactor. Formation of the three residue Trp-Tyr-Met cross-link is important for the catalase, but not the peroxidase activity of the enzyme.

It catalyses the reaction H2O2 + AH2 = A + 2 H2O. The enzyme catalyses 2 H2O2 = O2 + 2 H2O. Its function is as follows. Bifunctional enzyme with both catalase and broad-spectrum peroxidase activity. The polypeptide is Catalase-peroxidase 1 (Legionella pneumophila (strain Corby)).